The primary structure comprises 152 residues: Large ribosomal subunit protein bL9 (152 aa).

Belongs to the bacterial ribosomal protein bL9 family.

In terms of biological role, binds to the 23S rRNA. This chain is Large ribosomal subunit protein bL9, found in Mycobacterium ulcerans (strain Agy99).